A 263-amino-acid chain; its full sequence is MINAAVLGACGRMGSLIIENITCSTDMQLVAAFDIGSIGKDAGEFAHVSNLGIQISDVKDLETVLKKTQADVLIDFTAAGATIVNAPIAAGCGVNLIIGTTGLTPEQRKVIDETIQKNKVRAVISPNYSVGVNVFFKIVREAAKYLSDYDIEIIEAHHNQKKDAPSGTALRAADVISEALGGKEYVCGREGIAPRGKEIGIHAVRGGDITGDHTVLFVGNSERIEIRHMAHSRQIFAKGAVRAAEWICKQEPGIYSMDDVLGL.

NAD(+)-binding positions include 8-13 (GACGRM), aspartate 34, 99-101 (GTT), and 125-128 (SPNY). Residue histidine 157 is the Proton donor/acceptor of the active site. Histidine 158 serves as a coordination point for (S)-2,3,4,5-tetrahydrodipicolinate. The Proton donor role is filled by lysine 161. 167–168 (GT) serves as a coordination point for (S)-2,3,4,5-tetrahydrodipicolinate.

It belongs to the DapB family.

Its subcellular location is the cytoplasm. It carries out the reaction (S)-2,3,4,5-tetrahydrodipicolinate + NAD(+) + H2O = (2S,4S)-4-hydroxy-2,3,4,5-tetrahydrodipicolinate + NADH + H(+). It catalyses the reaction (S)-2,3,4,5-tetrahydrodipicolinate + NADP(+) + H2O = (2S,4S)-4-hydroxy-2,3,4,5-tetrahydrodipicolinate + NADPH + H(+). It participates in amino-acid biosynthesis; L-lysine biosynthesis via DAP pathway; (S)-tetrahydrodipicolinate from L-aspartate: step 4/4. Catalyzes the conversion of 4-hydroxy-tetrahydrodipicolinate (HTPA) to tetrahydrodipicolinate. This is 4-hydroxy-tetrahydrodipicolinate reductase from Methanosarcina acetivorans (strain ATCC 35395 / DSM 2834 / JCM 12185 / C2A).